Here is a 739-residue protein sequence, read N- to C-terminus: MQKYKKVIDHLQELMRDPRNIRNIGIIAHVDHGKTTLSDNLLSAAGMISDKMAGEMRALDYHEIEQQRGITIKAANISLYYQRDGKEFAINLVDTPGHIDFTGHVTRSLRVIDGAIVVVDSVEEVMVQTETVTRQALEERVRPLLFINKIDRLIKELKLTPQEIQQKILRIIRDFNGLIEAYGEPEFREKWKVKWDNDSVAFGSALHGWGLTNSIAAKKGIRFSDIVDIYNEDPEGLALRRDIPVHEALLDMVALHVPDPIEAQSYRVERLWRDKQDEELFNALKNCDPNGPLIMGVNAVRIDPHAGIVVTGRVFSGTLREGEDVYLINAKKKQKIQQTSIYMGPYRMRMDEIPAGNIAAVLGLTSASSGETVVADAIKDRVISGFEAIRYVTEPVVTVSVEAKNPQDLPKLIDTLRKLTLQDPNLVMIHNQETGEILLKGTGELHLEISLYEVRKAGLEFDVSEPTVVYRESVRGTSDVVLAKSPNKLNRIWVTASPLNDEVVALIREGRVNERMDSRTLAKVLREEGKMDTEDARNVWTIDEENYNLFINRTVGVQRLDEVREILRQGFMWVMKEGPLAGEPVMGVAIRLVNAMIHEDPAHRGPAQLTPAVRKAIFGAMLSANPVLLEPIYEIQVSTPPELIGSVISLISQKRGKVVGIEERGRISIVKGFIPVRETLGGFSNEMRSMTSGRAFWQTKFSHWEPLPKSLMEQVALEIRRRKGMKEELPKAEEYMDTL.

One can recognise a tr-type G domain in the interval Arg-19–Ile-261. GTP contacts are provided by residues Ala-28 to Thr-35, Asp-94 to His-98, and Asn-148 to Asp-151. Residue His-603 is modified to Diphthamide.

It belongs to the TRAFAC class translation factor GTPase superfamily. Classic translation factor GTPase family. EF-G/EF-2 subfamily.

The protein resides in the cytoplasm. Catalyzes the GTP-dependent ribosomal translocation step during translation elongation. During this step, the ribosome changes from the pre-translocational (PRE) to the post-translocational (POST) state as the newly formed A-site-bound peptidyl-tRNA and P-site-bound deacylated tRNA move to the P and E sites, respectively. Catalyzes the coordinated movement of the two tRNA molecules, the mRNA and conformational changes in the ribosome. In Korarchaeum cryptofilum (strain OPF8), this protein is Elongation factor 2.